The following is a 488-amino-acid chain: Cysteine--tRNA ligase (488 aa).

Position 28 (Cys28) interacts with Zn(2+). A 'HIGH' region motif is present at residues 30–40 (PTVYDDAHLGH). Zn(2+)-binding residues include Cys209, His239, and Glu243. The 'KMSKS' region signature appears at 271–275 (KMSKS). ATP is bound at residue Lys274.

It belongs to the class-I aminoacyl-tRNA synthetase family. As to quaternary structure, monomer. Zn(2+) is required as a cofactor.

It is found in the cytoplasm. It catalyses the reaction tRNA(Cys) + L-cysteine + ATP = L-cysteinyl-tRNA(Cys) + AMP + diphosphate. This Helicobacter hepaticus (strain ATCC 51449 / 3B1) protein is Cysteine--tRNA ligase.